The sequence spans 206 residues: Pyridoxine/pyridoxamine 5'-phosphate oxidase (206 aa).

FMN contacts are provided by residues 53 to 58 (RMVLLK), 68 to 69 (YT), lysine 75, and glutamine 97. Lysine 58 is a binding site for substrate. Substrate is bound by residues tyrosine 115, arginine 119, and serine 123. FMN-binding positions include 132 to 133 (QS) and tryptophan 177. 183 to 185 (RLH) lines the substrate pocket. Arginine 187 serves as a coordination point for FMN.

It belongs to the pyridoxamine 5'-phosphate oxidase family. As to quaternary structure, homodimer. It depends on FMN as a cofactor.

It carries out the reaction pyridoxamine 5'-phosphate + O2 + H2O = pyridoxal 5'-phosphate + H2O2 + NH4(+). The enzyme catalyses pyridoxine 5'-phosphate + O2 = pyridoxal 5'-phosphate + H2O2. It participates in cofactor metabolism; pyridoxal 5'-phosphate salvage; pyridoxal 5'-phosphate from pyridoxamine 5'-phosphate: step 1/1. The protein operates within cofactor metabolism; pyridoxal 5'-phosphate salvage; pyridoxal 5'-phosphate from pyridoxine 5'-phosphate: step 1/1. Functionally, catalyzes the oxidation of either pyridoxine 5'-phosphate (PNP) or pyridoxamine 5'-phosphate (PMP) into pyridoxal 5'-phosphate (PLP). This is Pyridoxine/pyridoxamine 5'-phosphate oxidase from Sinorhizobium fredii (strain NBRC 101917 / NGR234).